The chain runs to 316 residues: Protoheme IX farnesyltransferase (316 aa).

A run of 9 helical transmembrane segments spans residues 28–48 (IIPLLLITTAAAMEIASKGQV), 50–70 (PLLLFLTLLGGTLAAAAAQTL), 99–119 (HALIFALVLASLSLALFVFFV), 122–142 (LSGFLAMTGIAFYMLIYTHLL), 150–170 (IVIGGAAGSIPPLVGWAAVTG), 178–198 (ILFAIIFLWTPPHFWALALMI), 223–243 (IWLYTLIVVPFTFLLIYPLAA), 244–264 (CGVVYGVAALVLGFVFLKKAW), and 293–313 (AMVIDSLPMTSHLIATIASLF).

Belongs to the UbiA prenyltransferase family. Protoheme IX farnesyltransferase subfamily.

Its subcellular location is the cell inner membrane. It catalyses the reaction heme b + (2E,6E)-farnesyl diphosphate + H2O = Fe(II)-heme o + diphosphate. The protein operates within porphyrin-containing compound metabolism; heme O biosynthesis; heme O from protoheme: step 1/1. Its function is as follows. Converts heme B (protoheme IX) to heme O by substitution of the vinyl group on carbon 2 of heme B porphyrin ring with a hydroxyethyl farnesyl side group. The protein is Protoheme IX farnesyltransferase of Microcystis aeruginosa (strain NIES-843 / IAM M-2473).